The chain runs to 211 residues: MNGILISLEGPDGAGKTTVLKEILPEIQKMKREIVPTREPGGVRVAEEIRQIILDPKNTDIDSKTELMLFAAARRLHMQEKMLPALQAGKVVIVDRFIDSSVAYQGYGRDLGVEVVDWLNYFATDGLKPDLTLYFDVDTDVALERIMKNRADEVNRLDLERAEMHRKVREGYLEIVVKEPERFVKIDASQPLEKVVADTLSVLKKRFVSEF.

10-17 (GPDGAGKT) lines the ATP pocket.

The protein belongs to the thymidylate kinase family.

The enzyme catalyses dTMP + ATP = dTDP + ADP. Its function is as follows. Phosphorylation of dTMP to form dTDP in both de novo and salvage pathways of dTTP synthesis. In Lactococcus lactis subsp. lactis (strain IL1403) (Streptococcus lactis), this protein is Thymidylate kinase (tmk).